Consider the following 464-residue polypeptide: DNA repair protein KRE29 (464 aa).

A disordered region spans residues M1–N69. The segment covering P53 to S65 has biased composition (acidic residues). A phosphoserine mark is found at S81 and S101.

As to quaternary structure, component of the Smc5-Smc6 complex which consists of KRE29, MMS21, NSE1, NSE3, NSE4, NSE5, SMC5 and SMC6. Interacts with NSE5.

It localises to the nucleus. The protein resides in the cytoplasm. Functionally, acts in a DNA repair pathway for removal of UV-induced DNA damage that is distinct from classical nucleotide excision repair and in repair of ionizing radiation damage. Functions in homologous recombination repair of DNA double strand breaks and in recovery of stalled replication forks. The polypeptide is DNA repair protein KRE29 (KRE29) (Saccharomyces cerevisiae (strain ATCC 204508 / S288c) (Baker's yeast)).